The following is a 231-amino-acid chain: Ribosomal RNA small subunit methyltransferase nep-1 (231 aa).

S-adenosyl-L-methionine is bound by residues methionine 161, glycine 188, glycine 193, and 206–211 (ISNYPL).

The protein belongs to the class IV-like SAM-binding methyltransferase superfamily. RNA methyltransferase NEP1 family. In terms of assembly, homodimer.

The protein resides in the nucleus. It is found in the nucleolus. It catalyses the reaction a pseudouridine in rRNA + S-adenosyl-L-methionine = an N(1)-methylpseudouridine in rRNA + S-adenosyl-L-homocysteine + H(+). In terms of biological role, S-adenosyl-L-methionine-dependent pseudouridine N(1)-methyltransferase that methylates a pseudouridine in 18S rRNA. Involved the biosynthesis of the hypermodified N1-methyl-N3-(3-amino-3-carboxypropyl) pseudouridine (m1acp3-Psi) conserved in eukaryotic 18S rRNA. Also has an essential role in 40S ribosomal subunit biogenesis independent on its methyltransferase activity, facilitating the incorporation of ribosomal protein S19 during the formation of pre-ribosomes. In Caenorhabditis elegans, this protein is Ribosomal RNA small subunit methyltransferase nep-1.